Reading from the N-terminus, the 375-residue chain is Anhydro-N-acetylmuramic acid kinase (375 aa).

Position 12–19 (12–19 (GTSLDGVD)) interacts with ATP.

This sequence belongs to the anhydro-N-acetylmuramic acid kinase family.

It catalyses the reaction 1,6-anhydro-N-acetyl-beta-muramate + ATP + H2O = N-acetyl-D-muramate 6-phosphate + ADP + H(+). It participates in amino-sugar metabolism; 1,6-anhydro-N-acetylmuramate degradation. It functions in the pathway cell wall biogenesis; peptidoglycan recycling. In terms of biological role, catalyzes the specific phosphorylation of 1,6-anhydro-N-acetylmuramic acid (anhMurNAc) with the simultaneous cleavage of the 1,6-anhydro ring, generating MurNAc-6-P. Is required for the utilization of anhMurNAc either imported from the medium or derived from its own cell wall murein, and thus plays a role in cell wall recycling. The protein is Anhydro-N-acetylmuramic acid kinase of Mannheimia succiniciproducens (strain KCTC 0769BP / MBEL55E).